The primary structure comprises 720 residues: MLRVLHRAASALVMATVIGLAPGVAFALAEPTSTPQAPIAAYKPRSNEILWDGYGVPHIYGVDAPSAFYGYGWAQARSHGDNILRLYGEARGKGAEYWGPDYEQTTVWLLTNGVPERAQQWYAQQSPDFRANLDAFAAGINAYAQQNPDDISPEVRQVLPVSGADVVAHAHRLMNFLYVASPGRTLGEGDPPDLADQGSNSWAVAPGKTANGNALLLQNPHLSWTTDYFTYYEAHLVTPDFEIYGATQIGLPVIRFAFNQRMGITNTVNGMVGATNYRLTLQDGGYLYDGQVRPFERRQASYRLRQADGSTVDKPLEIRSSVHGPVFERADGTAVAVRVAGLDRPGMLEQYFDMITAHSFDDYEAAMARMQVPTFNIVYADREGTINYSFNGVAPKRAEGDIAFWQGNVPGDSSRYLWTETHPLDDLPRVTNPPGGFVQNSNDPPWTPTWPVTYTPRDHPSYLAPQTPHSLRAQQSVRLMSENDDLTLERFMALQFSHRAVMADRTLPDLIPAALIDPDPEVQAAARLLAAWDREFTSDSRAALLFEEWARLFAGQNFAGQAAFATPWSLDKPVSTPYGVRDPKAAVDQLRTAIANTKRKYGAIDRPFGDASRMILNDVNVPGAAGYGNLGSFRVFTWSDPDENGIRTPVHGETWVAMIEFSTPVRAYGLMSYGNSRQPGTTHYSDQIERVSRADFRELLLRREQVEAAVQERTPFNFKP.

Positions 1-29 are cleaved as a signal peptide; the sequence is MLRVLHRAASALVMATVIGLAPGVAFALA. The propeptide at 188–198 is spacer peptide; the sequence is EGDPPDLADQG. Ser-199 (nucleophile) is an active-site residue. Active-site residues include His-221 and Glu-653.

It belongs to the peptidase S45 family. As to quaternary structure, heterodimer of a small subunit and a large subunit processed from the same precursor.

It localises to the periplasm. It catalyses the reaction (7R)-7-(4-carboxybutanamido)cephalosporanate + H2O = (7R)-7-aminocephalosporanate + glutarate. Its function is as follows. Catalyzes the deacylation of 7 beta-(4-carboxybutanamido)cephalosporanic acid (glutaryl-7-aminocephalosporanic acid or GL-7-ACA) to 7-aminocephalosporanic acid (7-ACA). Cannot efficiently use cephalosporin C (CPC), penicillin G, or ampicillin as substrates. This is Glutaryl-7-aminocephalosporanic-acid acylase from Brevundimonas diminuta (Pseudomonas diminuta).